The chain runs to 348 residues: Phospho-2-dehydro-3-deoxyheptonate aldolase, Trp-sensitive (348 aa).

It belongs to the class-I DAHP synthase family.

The catalysed reaction is D-erythrose 4-phosphate + phosphoenolpyruvate + H2O = 7-phospho-2-dehydro-3-deoxy-D-arabino-heptonate + phosphate. It functions in the pathway metabolic intermediate biosynthesis; chorismate biosynthesis; chorismate from D-erythrose 4-phosphate and phosphoenolpyruvate: step 1/7. Its function is as follows. Stereospecific condensation of phosphoenolpyruvate (PEP) and D-erythrose-4-phosphate (E4P) giving rise to 3-deoxy-D-arabino-heptulosonate-7-phosphate (DAHP). This is Phospho-2-dehydro-3-deoxyheptonate aldolase, Trp-sensitive (aroH) from Escherichia coli (strain K12).